Consider the following 151-residue polypeptide: Large ribosomal subunit protein bL17 (151 aa).

Belongs to the bacterial ribosomal protein bL17 family. Part of the 50S ribosomal subunit. Contacts protein L32.

The polypeptide is Large ribosomal subunit protein bL17 (Chlorobium limicola (strain DSM 245 / NBRC 103803 / 6330)).